A 299-amino-acid polypeptide reads, in one-letter code: Urease accessory protein UreD (299 aa).

Belongs to the UreD family. UreD, UreF and UreG form a complex that acts as a GTP-hydrolysis-dependent molecular chaperone, activating the urease apoprotein by helping to assemble the nickel containing metallocenter of UreC. The UreE protein probably delivers the nickel.

Its subcellular location is the cytoplasm. Its function is as follows. Required for maturation of urease via the functional incorporation of the urease nickel metallocenter. This is Urease accessory protein UreD from Prochlorococcus marinus (strain MIT 9303).